The sequence spans 132 residues: Peptide methionine sulfoxide reductase MsrB (132 aa).

One can recognise a MsrB domain in the interval 8–130 (LDSWREELTE…NSASLKLVPR (123 aa)). Residues Cys47, Cys50, Cys96, and Cys99 each contribute to the Zn(2+) site. Catalysis depends on Cys119, which acts as the Nucleophile.

This sequence belongs to the MsrB Met sulfoxide reductase family. It depends on Zn(2+) as a cofactor.

The enzyme catalyses L-methionyl-[protein] + [thioredoxin]-disulfide + H2O = L-methionyl-(R)-S-oxide-[protein] + [thioredoxin]-dithiol. The chain is Peptide methionine sulfoxide reductase MsrB from Pseudomonas aeruginosa (strain UCBPP-PA14).